The primary structure comprises 207 residues: Uracil phosphoribosyltransferase (207 aa).

5-phospho-alpha-D-ribose 1-diphosphate is bound by residues Arg-77, Arg-102, and Asp-129 to Ser-137. Residues Ile-192 and Gly-197–Ala-199 each bind uracil. Residue Asp-198 coordinates 5-phospho-alpha-D-ribose 1-diphosphate.

This sequence belongs to the UPRTase family. Mg(2+) serves as cofactor.

It carries out the reaction UMP + diphosphate = 5-phospho-alpha-D-ribose 1-diphosphate + uracil. It participates in pyrimidine metabolism; UMP biosynthesis via salvage pathway; UMP from uracil: step 1/1. Allosterically activated by GTP. Catalyzes the conversion of uracil and 5-phospho-alpha-D-ribose 1-diphosphate (PRPP) to UMP and diphosphate. This chain is Uracil phosphoribosyltransferase, found in Mesoplasma florum (strain ATCC 33453 / NBRC 100688 / NCTC 11704 / L1) (Acholeplasma florum).